A 159-amino-acid chain; its full sequence is 2-C-methyl-D-erythritol 2,4-cyclodiphosphate synthase (159 aa).

Residues Asp8 and His10 each contribute to the a divalent metal cation site. 4-CDP-2-C-methyl-D-erythritol 2-phosphate is bound by residues 8–10 (DVH) and 34–35 (HS). His42 contacts a divalent metal cation. Residues 56–58 (DIG), 61–65 (FPDTD), 100–106 (AQAPKML), 132–135 (TTTE), Phe139, and Arg142 contribute to the 4-CDP-2-C-methyl-D-erythritol 2-phosphate site.

It belongs to the IspF family. Homotrimer. Requires a divalent metal cation as cofactor.

It catalyses the reaction 4-CDP-2-C-methyl-D-erythritol 2-phosphate = 2-C-methyl-D-erythritol 2,4-cyclic diphosphate + CMP. The protein operates within isoprenoid biosynthesis; isopentenyl diphosphate biosynthesis via DXP pathway; isopentenyl diphosphate from 1-deoxy-D-xylulose 5-phosphate: step 4/6. Involved in the biosynthesis of isopentenyl diphosphate (IPP) and dimethylallyl diphosphate (DMAPP), two major building blocks of isoprenoid compounds. Catalyzes the conversion of 4-diphosphocytidyl-2-C-methyl-D-erythritol 2-phosphate (CDP-ME2P) to 2-C-methyl-D-erythritol 2,4-cyclodiphosphate (ME-CPP) with a corresponding release of cytidine 5-monophosphate (CMP). The sequence is that of 2-C-methyl-D-erythritol 2,4-cyclodiphosphate synthase from Klebsiella pneumoniae subsp. pneumoniae (strain ATCC 700721 / MGH 78578).